The chain runs to 250 residues: MAGLRVEVISLFPDMFAAISEYGITSRAVKQGLLQLNCWNPRSYTEDRHQTVDDRPFGGGPGMVMKIKPLELALADAKRAAGGKAKVIYLSPQGRQLKQADVRELANEEALILIAGRYEGIDERFIEAHVDEEWSIGDYVLSGGELPAMVLIDAVTRLLPGALGHAGSAEEDSFTDGLLDCPHYTRPEVYEGKCVPEVLLSGNHEHIRRWRLQQSLGRTWERRADLLDSRSLSGEEQKLLAEYIRQRNDS.

S-adenosyl-L-methionine is bound by residues Gly116 and 136 to 141 (IGDYVL).

This sequence belongs to the RNA methyltransferase TrmD family. In terms of assembly, homodimer.

Its subcellular location is the cytoplasm. It catalyses the reaction guanosine(37) in tRNA + S-adenosyl-L-methionine = N(1)-methylguanosine(37) in tRNA + S-adenosyl-L-homocysteine + H(+). In terms of biological role, specifically methylates guanosine-37 in various tRNAs. The sequence is that of tRNA (guanine-N(1)-)-methyltransferase from Stutzerimonas stutzeri (strain A1501) (Pseudomonas stutzeri).